A 290-amino-acid polypeptide reads, in one-letter code: Probable ATP-dependent kinase TDA10 (290 aa).

ATP is bound at residue 38–45 (GPQGSGKS).

Belongs to the GLYK kinase family.

The protein resides in the cytoplasm. The protein localises to the nucleus. Its function is as follows. ATP-dependent kinase whose specificity is not yet known. This chain is Probable ATP-dependent kinase TDA10 (TDA10), found in Saccharomyces cerevisiae (strain ATCC 204508 / S288c) (Baker's yeast).